A 948-amino-acid polypeptide reads, in one-letter code: Protocadherin alpha-10 (948 aa).

Positions 1–28 are cleaved as a signal peptide; sequence MVSRCSCLGVQCLLLSLLLLAAWEVGSG. 6 consecutive Cadherin domains span residues 29-132, 133-241, 242-349, 350-454, 455-564, and 587-689; these read QLHY…PPRF, SVTE…APIF, DRPV…SPEV, IVTS…APAF, AQPE…APAL, and GHVV…APEV. At 29-695 the chain is on the extracellular side; that stretch reads QLHYSVYEEA…APEVALVDVN (667 aa). Asparagine 256 and asparagine 264 each carry an N-linked (GlcNAc...) asparagine glycan. Asparagine 547 carries N-linked (GlcNAc...) asparagine glycosylation. Residues 696–716 form a helical membrane-spanning segment; sequence VYLIIAICAVSSLLVLTLLLY. The Cytoplasmic segment spans residues 717-948; sequence TALRCSAAPT…GNSTTDNSDQ (232 aa). PXXP repeat units lie at residues 732-735, 772-775, 797-800, 830-833, 871-874, and 889-892; these read PVKP, PSLP, PRQP, PGGP, PGNP, and PGSP. Residues 732-892 form a 6 X 4 AA repeats of P-X-X-P region; the sequence is PVKPTLVCSS…PDKFIIPGSP (161 aa). 2 disordered regions span residues 783–804 and 827–948; these read DGED…NPDW and RAGP…NSDQ. Over residues 907–921 the composition is skewed to basic and acidic residues; the sequence is DKSDFITFGKKEETK.

The protein resides in the cell membrane. Functionally, potential calcium-dependent cell-adhesion protein. May be involved in the establishment and maintenance of specific neuronal connections in the brain. The polypeptide is Protocadherin alpha-10 (PCDHA10) (Pan troglodytes (Chimpanzee)).